The sequence spans 263 residues: 3-methyl-2-oxobutanoate hydroxymethyltransferase (263 aa).

The Mg(2+) site is built by Asp44 and Asp83. 3-methyl-2-oxobutanoate is bound by residues 44–45 (DS), Asp83, and Lys112. A Mg(2+)-binding site is contributed by Glu114. Catalysis depends on Glu181, which acts as the Proton acceptor.

Belongs to the PanB family. In terms of assembly, homodecamer; pentamer of dimers. Mg(2+) serves as cofactor.

Its subcellular location is the cytoplasm. It catalyses the reaction 3-methyl-2-oxobutanoate + (6R)-5,10-methylene-5,6,7,8-tetrahydrofolate + H2O = 2-dehydropantoate + (6S)-5,6,7,8-tetrahydrofolate. It participates in cofactor biosynthesis; (R)-pantothenate biosynthesis; (R)-pantoate from 3-methyl-2-oxobutanoate: step 1/2. Functionally, catalyzes the reversible reaction in which hydroxymethyl group from 5,10-methylenetetrahydrofolate is transferred onto alpha-ketoisovalerate to form ketopantoate. This chain is 3-methyl-2-oxobutanoate hydroxymethyltransferase, found in Sulfurimonas denitrificans (strain ATCC 33889 / DSM 1251) (Thiomicrospira denitrificans (strain ATCC 33889 / DSM 1251)).